The following is a 448-amino-acid chain: MESAQDNQGRILLVDDESAILRTFRYCLEDEGYSVATANSAAQAETLLQRQVFDLCFLDLRLGEDNGLDVLAQMRIQAPWMRVVIVTAHSAIDTAVDAIQAGAADYLVKPCSPDQLRLATAKQLEVRQLSARLEALEGEIRKPKDGLDSHSPAMMAVLETARQVAITDANILILGESGTGKGELARAIHGWSKRARKACVTINCPSLNAELMESELFGHTRGAFTGASESTLGRVSQADGGTLFLDEIGDFPLTLQPKLLRFIQDKEYERVGDPVTRRADVRILAATNLNLEEMVRESRFREDLLYRLNVITLHLPPLRERSEDILILADRFLARFVKEYSRPARGFSDEARTALLNYRWPGNIRELRNVVERASIICPQERVEISHLGMGEQPAGSAPRVGAALSLDELERAHIGAVLAASDTLDQAAKTLGIDASTLYRKRKQYNL.

Positions Arg-10–Leu-124 constitute a Response regulatory domain. At Asp-59 the chain carries 4-aspartylphosphate. The region spanning Leu-147–Ile-376 is the Sigma-54 factor interaction domain. Residues Gly-175 to Gly-182 and Ala-238 to Glu-247 contribute to the ATP site. A DNA-binding region (H-T-H motif) is located at residues Leu-425 to Lys-444.

Its pathway is glycan biosynthesis; alginate biosynthesis [regulation]. Its function is as follows. Positive regulator of the alginate biosynthetic gene algD. The chain is Alginate biosynthesis transcriptional regulatory protein AlgB (algB) from Pseudomonas putida (strain ATCC 47054 / DSM 6125 / CFBP 8728 / NCIMB 11950 / KT2440).